The sequence spans 196 residues: Rac-like GTP-binding protein RAC9 (196 aa).

Residue 13 to 20 coordinates GTP; sequence GDGAVGKT. An Effector region motif is present at residues 35–43; sequence YVPTVFDNF. Residues 60–64 and 118–121 each bind GTP; these read DTAGQ and TKLD. A Cysteine methyl ester modification is found at cysteine 193. The S-geranylgeranyl cysteine moiety is linked to residue cysteine 193. A propeptide spans 194-196 (removed in mature form); the sequence is AFL.

It belongs to the small GTPase superfamily. Rho family.

Its subcellular location is the cytoplasm. The protein localises to the membrane. Functionally, inactive GDP-bound Rho GTPases reside in the cytosol, are found in a complex with Rho GDP-dissociation inhibitors (Rho GDIs), and are released from the GDI protein in order to translocate to membranes upon activation. The polypeptide is Rac-like GTP-binding protein RAC9 (RAC9) (Gossypium hirsutum (Upland cotton)).